The sequence spans 179 residues: UPF0167 protein PA1536 (179 aa).

Belongs to the UPF0167 family.

In Pseudomonas aeruginosa (strain ATCC 15692 / DSM 22644 / CIP 104116 / JCM 14847 / LMG 12228 / 1C / PRS 101 / PAO1), this protein is UPF0167 protein PA1536.